A 548-amino-acid polypeptide reads, in one-letter code: Chaperonin GroEL 3 (548 aa).

Residues 30–33 (TLGP), lysine 51, 87–91 (DGTTT), glycine 415, and aspartate 496 each bind ATP.

This sequence belongs to the chaperonin (HSP60) family. As to quaternary structure, forms a cylinder of 14 subunits composed of two heptameric rings stacked back-to-back. Interacts with the co-chaperonin GroES.

Its subcellular location is the cytoplasm. The enzyme catalyses ATP + H2O + a folded polypeptide = ADP + phosphate + an unfolded polypeptide.. Together with its co-chaperonin GroES, plays an essential role in assisting protein folding. The GroEL-GroES system forms a nano-cage that allows encapsulation of the non-native substrate proteins and provides a physical environment optimized to promote and accelerate protein folding. This is Chaperonin GroEL 3 from Nitrobacter winogradskyi (strain ATCC 25391 / DSM 10237 / CIP 104748 / NCIMB 11846 / Nb-255).